Consider the following 1045-residue polypeptide: Septation initiation network scaffold protein cdc11 (1045 aa).

Residues 1 to 11 (MEQLWLEHDLS) show a composition bias toward basic and acidic residues. 2 disordered regions span residues 1-269 (MEQL…NTKD) and 282-329 (RGRM…PSLS). A compositionally biased stretch (polar residues) spans 18–39 (PQEQGSDNSSEPPTTSNVNNTQ). Composition is skewed to low complexity over residues 40-52 (STGR…STEH), 96-132 (KQSP…NVSN), and 152-165 (ISSS…SEGS). Residues 166-176 (LKSQQSNTRSN) show a composition bias toward polar residues. Low complexity predominate over residues 187–201 (ASNASSSSSVVSSPS). 2 stretches are compositionally biased toward polar residues: residues 226–238 (NQLT…NSFE) and 320–329 (DSSNAFPSLS). S360 bears the Phosphoserine mark. A disordered region spans residues 377 to 417 (DVGSSQSSSKTARLNSSPKSTLKTSSVKTRRSHSAQSSRKV). Residues 379–403 (GSSQSSSKTARLNSSPKSTLKTSSV) show a composition bias toward polar residues. At S558 the chain carries Phosphoserine. LRR repeat units follow at residues 604-625 (RIIQ…SELC), 627-646 (SIEE…GCPV), 647-668 (TIRD…SNLL), 669-690 (NLQY…SSLI), 691-712 (HLRE…QHLD), 713-734 (GLLK…NSNL), 736-757 (RLEE…SSLQ), 758-779 (NLMV…QPMI), 780-801 (HLRI…QFPH), 802-822 (LRTL…RRLK), 846-867 (DIRN…HMFL), 868-889 (GVRY…IATS), 892-913 (NLRV…KPLQ), 914-935 (MIHR…CDIL), and 940-962 (QLNV…IDDS). The LRRCT domain maps to 1005 to 1043 (AWRTRRKMYAEAILLACPHLEWLDGSDVSQSSRAAFTKS).

Interacts with sid4. When hyperphosphorylated, interacts with byr4. Also interacts with spg1, sid2, cdc13 and cdc16. Phosphorylated by cdc7 and cdk1. Hyperphosphorylated during anaphase. Dephosphorylated by par1.

It is found in the cytoplasm. Its subcellular location is the cytoskeleton. The protein resides in the microtubule organizing center. The protein localises to the spindle pole body. Functionally, essential for the onset of septum formation. Involved in the organization of astral microtubules during mitosis. Acts as a bridge between sid4 and the other SIN proteins mediating their association with the spindle pole body (SPB). The sid4-cdc11 complex organizes a signaling hub on the SPB which coordinates cell and nuclear division. The chain is Septation initiation network scaffold protein cdc11 (cdc11) from Schizosaccharomyces pombe (strain 972 / ATCC 24843) (Fission yeast).